Consider the following 238-residue polypeptide: Probable transcriptional regulatory protein SPH_2064 (238 aa).

This sequence belongs to the TACO1 family. YeeN subfamily.

It localises to the cytoplasm. The polypeptide is Probable transcriptional regulatory protein SPH_2064 (Streptococcus pneumoniae (strain Hungary19A-6)).